Here is a 40-residue protein sequence, read N- to C-terminus: Dihydrolipoyl dehydrogenase (40 aa).

36 to 40 serves as a coordination point for FAD; the sequence is EKRGT.

This sequence belongs to the class-I pyridine nucleotide-disulfide oxidoreductase family. In terms of assembly, homodimer. The cofactor is FAD.

It is found in the mitochondrion matrix. The enzyme catalyses N(6)-[(R)-dihydrolipoyl]-L-lysyl-[protein] + NAD(+) = N(6)-[(R)-lipoyl]-L-lysyl-[protein] + NADH + H(+). Functionally, lipoamide dehydrogenase is a component of the glycine cleavage system as well as of the alpha-ketoacid dehydrogenase complexes. The pyruvate dehydrogenase complex contains multiple copies of three enzymatic components: pyruvate dehydrogenase (E1), dihydrolipoamide acetyltransferase (E2) and lipoamide dehydrogenase (E3). The protein is Dihydrolipoyl dehydrogenase of Solanum tuberosum (Potato).